The sequence spans 183 residues: UPF0398 protein MCCL_1095 (183 aa).

It belongs to the UPF0398 family.

The sequence is that of UPF0398 protein MCCL_1095 from Macrococcus caseolyticus (strain JCSC5402) (Macrococcoides caseolyticum).